The sequence spans 258 residues: MQIIRNNSQDPISISNWRWACFLDETIKAFSTFQTRPYQIDNDFLFRESFFGSSSNPKKVILETWGLKMEKIRQARCACLQAGEITSVMNLVISPLNNYDLPFFGADFVTLPNGHLIALDLQPALKDDINHTQHVWNKLKPIHAHWQSKIPSGGDIPSDARQYFSPAFLWSRIPLGEEGDNLITQTIKPAFDEYLNCFFDLLRDAKITSKERSFQLLNGQKKYMRYRAEKDPARGMLRSFFGEVWTESYINNILFDLK.

Belongs to the HY2 family.

It carries out the reaction (3Z)-phycoerythrobilin + oxidized 2[4Fe-4S]-[ferredoxin] = 15,16-dihydrobiliverdin + reduced 2[4Fe-4S]-[ferredoxin] + 2 H(+). Functionally, catalyzes the two-electron reduction of the C2 and C3(1) diene system of 15,16-dihydrobiliverdin. In Prochlorococcus marinus (strain NATL2A), this protein is Phycoerythrobilin:ferredoxin oxidoreductase.